Consider the following 311-residue polypeptide: Large ribosomal subunit protein uL18 (311 aa).

This sequence belongs to the universal ribosomal protein uL18 family. As to quaternary structure, component of the large ribosomal subunit (LSU).

The protein localises to the cytoplasm. The protein resides in the nucleus. Component of the ribosome, a large ribonucleoprotein complex responsible for the synthesis of proteins in the cell. The small ribosomal subunit (SSU) binds messenger RNAs (mRNAs) and translates the encoded message by selecting cognate aminoacyl-transfer RNA (tRNA) molecules. The large subunit (LSU) contains the ribosomal catalytic site termed the peptidyl transferase center (PTC), which catalyzes the formation of peptide bonds, thereby polymerizing the amino acids delivered by tRNAs into a polypeptide chain. The nascent polypeptides leave the ribosome through a tunnel in the LSU and interact with protein factors that function in enzymatic processing, targeting, and the membrane insertion of nascent chains at the exit of the ribosomal tunnel. This chain is Large ribosomal subunit protein uL18 (RPL5), found in Eimeria tenella (Coccidian parasite).